The sequence spans 491 residues: MELRLYDTLTRDKRPFTPIDPANVRMYVCGPTVYDFAHIGNARPVIVFDVLFRLLRHLYGEAHVKYVRNITDVDDKINDRAARDYPGLPLNEAIRKVTEQTERQFHDDVDALGCLRPTVEPRATEHIGEMRSIIEKLVAGGFAYVEQDHVLFSPSAMNAANGVLPRYGSLANRSLDEMIAGARVDVAPYKRDATDFVLWKPSKPGEPSWPSPAGIATPGRPGWHIECSAMSWKHLGETFDIHGGGIDLVFPHHENEVAQSCCAFHTKRMAQTWMHNGFLQVEGEKMSKSLGNFITIRELLATNKFGGRSWDGATLRLAMLKTHYRQPIDWTVDALEEAQKRVAKYRRTLERFRGGKNVEVPHGVVSALSDDLNTHAAITELDALNRRANGVTHEGPTSEADALAANAIAADELRASLRLLGISVASERSGAVNQIFDQNIQRLIAVRTAARANKDWKESDRIRDELAAMGVVLKDGKDADGKPVTTWELAR.

Position 29 (Cys-29) interacts with Zn(2+). The short motif at 31 to 41 is the 'HIGH' region element; sequence PTVYDFAHIGN. Positions 227, 252, and 256 each coordinate Zn(2+). The 'KMSKS' region motif lies at 285–289; sequence KMSKS. Lys-288 is an ATP binding site.

This sequence belongs to the class-I aminoacyl-tRNA synthetase family. As to quaternary structure, monomer. Zn(2+) serves as cofactor.

Its subcellular location is the cytoplasm. The enzyme catalyses tRNA(Cys) + L-cysteine + ATP = L-cysteinyl-tRNA(Cys) + AMP + diphosphate. This is Cysteine--tRNA ligase from Rhodopseudomonas palustris (strain TIE-1).